A 144-amino-acid polypeptide reads, in one-letter code: MAIERTLSIIKPDAVAKNVIGQIYSRFEKAGLKIIAAKMCHLSKPQAEKFYAVHKDRPFYPDLVKFMTQGPVMIQVLEGENAIVKNREIMGATNPKEALPGTIRADFADSIDANAVHGSDGPETAKEEIAFFFKPDESFNSIGV.

6 residues coordinate ATP: Lys-11, Phe-59, Arg-87, Thr-93, Arg-104, and Asn-114. His-117 (pros-phosphohistidine intermediate) is an active-site residue.

The protein belongs to the NDK family. In terms of assembly, homotetramer. Requires Mg(2+) as cofactor.

Its subcellular location is the cytoplasm. The catalysed reaction is a 2'-deoxyribonucleoside 5'-diphosphate + ATP = a 2'-deoxyribonucleoside 5'-triphosphate + ADP. It catalyses the reaction a ribonucleoside 5'-diphosphate + ATP = a ribonucleoside 5'-triphosphate + ADP. Its function is as follows. Major role in the synthesis of nucleoside triphosphates other than ATP. The ATP gamma phosphate is transferred to the NDP beta phosphate via a ping-pong mechanism, using a phosphorylated active-site intermediate. In Coxiella burnetii (strain CbuG_Q212) (Coxiella burnetii (strain Q212)), this protein is Nucleoside diphosphate kinase.